We begin with the raw amino-acid sequence, 150 residues long: Large ribosomal subunit protein bL9 (150 aa).

It belongs to the bacterial ribosomal protein bL9 family.

Its function is as follows. Binds to the 23S rRNA. This is Large ribosomal subunit protein bL9 from Streptococcus pyogenes serotype M5 (strain Manfredo).